The sequence spans 743 residues: Threonine--tRNA ligase (743 aa).

Residues 1–15 (MSADSPSSPASSQAA) show a composition bias toward low complexity. Residues 1 to 30 (MSADSPSSPASSQAAEVQVRLPDGSLKTQP) are disordered. The region spanning 13-76 (QAAEVQVRLP…GEIADDENVV (64 aa)) is the TGS domain. Positions 264-619 (DHRVLGKQHG…LIEHFAGAFP (356 aa)) are catalytic. The segment at 354–404 (AWSTRLDKDDLSKDDEDKLIAAAEVFGVKLPDYKPSASNDAKKDVLHRWQL) is insert. Residues Cys-416, His-467, and His-596 each coordinate Zn(2+).

It belongs to the class-II aminoacyl-tRNA synthetase family. As to quaternary structure, homodimer. Zn(2+) is required as a cofactor.

Its subcellular location is the cytoplasm. It catalyses the reaction tRNA(Thr) + L-threonine + ATP = L-threonyl-tRNA(Thr) + AMP + diphosphate + H(+). Catalyzes the attachment of threonine to tRNA(Thr) in a two-step reaction: L-threonine is first activated by ATP to form Thr-AMP and then transferred to the acceptor end of tRNA(Thr). Also edits incorrectly charged L-seryl-tRNA(Thr). This is Threonine--tRNA ligase from Rhodopirellula baltica (strain DSM 10527 / NCIMB 13988 / SH1).